Consider the following 279-residue polypeptide: Protoheme IX farnesyltransferase (279 aa).

The next 9 membrane-spanning stretches (helical) occupy residues 5–25 (LILLKPRVIWLLILASLAGYL), 33–53 (IAQAFSLLLVAFLSTGGAAAF), 84–103 (LAYSLVLSALGIALGFLLLG), 108–125 (LFVFLGWFFYAVVYTVIL), 133–153 (ILGGGFAGNATFLGGYALGAG), 159–179 (AVLISFAIYLWIPSHIWALAY), 201–221 (AAVAIISLLNLASAAYIMTLY), 222–242 (LAFGGGLLGGALVAAGVVATI), and 256–276 (AMWKMYKASSPVLTLFLLALI).

It belongs to the UbiA prenyltransferase family. Protoheme IX farnesyltransferase subfamily.

It is found in the cell membrane. It carries out the reaction heme b + (2E,6E)-farnesyl diphosphate + H2O = Fe(II)-heme o + diphosphate. It participates in porphyrin-containing compound metabolism; heme O biosynthesis; heme O from protoheme: step 1/1. Its function is as follows. Converts heme B (protoheme IX) to heme O by substitution of the vinyl group on carbon 2 of heme B porphyrin ring with a hydroxyethyl farnesyl side group. This chain is Protoheme IX farnesyltransferase, found in Pyrobaculum arsenaticum (strain DSM 13514 / JCM 11321 / PZ6).